Consider the following 193-residue polypeptide: ATP-dependent Clp protease proteolytic subunit (193 aa).

The active-site Nucleophile is Ser98. The active site involves His123.

Belongs to the peptidase S14 family. As to quaternary structure, fourteen ClpP subunits assemble into 2 heptameric rings which stack back to back to give a disk-like structure with a central cavity, resembling the structure of eukaryotic proteasomes.

The protein resides in the cytoplasm. The enzyme catalyses Hydrolysis of proteins to small peptides in the presence of ATP and magnesium. alpha-casein is the usual test substrate. In the absence of ATP, only oligopeptides shorter than five residues are hydrolyzed (such as succinyl-Leu-Tyr-|-NHMec, and Leu-Tyr-Leu-|-Tyr-Trp, in which cleavage of the -Tyr-|-Leu- and -Tyr-|-Trp bonds also occurs).. Its function is as follows. Cleaves peptides in various proteins in a process that requires ATP hydrolysis. Has a chymotrypsin-like activity. Plays a major role in the degradation of misfolded proteins. The chain is ATP-dependent Clp protease proteolytic subunit from Mannheimia succiniciproducens (strain KCTC 0769BP / MBEL55E).